A 236-amino-acid chain; its full sequence is Adenosine 5'-phosphosulfate reductase (236 aa).

[4Fe-4S] cluster is bound by residues Cys-122, Cys-123, Cys-205, and Cys-208. The active-site Nucleophile; cysteine thiosulfonate intermediate is Cys-231.

The protein belongs to the PAPS reductase family. CysH subfamily. The cofactor is [4Fe-4S] cluster.

It localises to the cytoplasm. It catalyses the reaction [thioredoxin]-disulfide + sulfite + AMP + 2 H(+) = adenosine 5'-phosphosulfate + [thioredoxin]-dithiol. It functions in the pathway sulfur metabolism; hydrogen sulfide biosynthesis; sulfite from sulfate. Functionally, catalyzes the formation of sulfite from adenosine 5'-phosphosulfate (APS) using thioredoxin as an electron donor. In Mycolicibacterium smegmatis (strain ATCC 700084 / mc(2)155) (Mycobacterium smegmatis), this protein is Adenosine 5'-phosphosulfate reductase.